A 1292-amino-acid polypeptide reads, in one-letter code: SH3 and multiple ankyrin repeat domains protein 2 (1292 aa).

The region spanning 56–150 (TVVLQKKDNE…HLVLKVVTVT (95 aa)) is the PDZ domain. Disordered stretches follow at residues 155–176 (PDDT…TALS), 331–393 (MPDA…SDNV), 488–508 (IKEP…METD), 604–656 (SSNA…KLLD), 671–743 (ALKE…EKKN), 774–811 (LTES…SECG), and 938–968 (IEEV…TLSS). Residues 338–354 (IPPPPATLPPSPPPPSP) are compositionally biased toward pro residues. Low complexity predominate over residues 355–365 (SSFNSPKSPAP). Over residues 375–384 (FTQNSGTKSP) the composition is skewed to polar residues. The span at 492 to 504 (STSSSGKSSQGSS) shows a compositional bias: low complexity. Positions 604–623 (SSNAFTNNDSSHQGDVSNAR) are enriched in polar residues. Over residues 719-743 (KRQETESKHEPDSSKEEKRQGEKKN) the composition is skewed to basic and acidic residues. Residues 941-952 (VDSRSGSDHHLE) are compositionally biased toward basic and acidic residues. Residues 953–968 (TTSTISTVSSISTLSS) are compositionally biased toward low complexity. An SH3-binding motif is present at residues 991 to 997 (PPVPPKP). The disordered stretch occupies residues 1087–1115 (TKTGEGLDSPTGMKTASLSTRGTDALSTV). A compositionally biased stretch (polar residues) spans 1098–1115 (GMKTASLSTRGTDALSTV). The SAM domain occupies 1229 to 1292 (WTKQDVAEWL…ERALKQLLDR (64 aa)).

It belongs to the SHANK family.

Its subcellular location is the cytoplasm. It is found in the synapse. The protein localises to the postsynaptic density. Functionally, seems to be an adapter protein in the postsynaptic density (PSD) of excitatory synapses that interconnects receptors of the postsynaptic membrane including NMDA-type and metabotropic glutamate receptors, and the actin-based cytoskeleton. May play a role in the structural and functional organization of the dendritic spine and synaptic junction. The sequence is that of SH3 and multiple ankyrin repeat domains protein 2 (shank2) from Xenopus laevis (African clawed frog).